We begin with the raw amino-acid sequence, 440 residues long: L-seryl-tRNA(Sec) selenium transferase (440 aa).

N6-(pyridoxal phosphate)lysine is present on lysine 282.

Belongs to the SelA family. It depends on pyridoxal 5'-phosphate as a cofactor.

The protein resides in the cytoplasm. The catalysed reaction is L-seryl-tRNA(Sec) + selenophosphate + H(+) = L-selenocysteinyl-tRNA(Sec) + phosphate. The protein operates within aminoacyl-tRNA biosynthesis; selenocysteinyl-tRNA(Sec) biosynthesis; selenocysteinyl-tRNA(Sec) from L-seryl-tRNA(Sec) (bacterial route): step 1/1. Its function is as follows. Converts seryl-tRNA(Sec) to selenocysteinyl-tRNA(Sec) required for selenoprotein biosynthesis. This chain is L-seryl-tRNA(Sec) selenium transferase, found in Campylobacter jejuni (strain RM1221).